A 260-amino-acid chain; its full sequence is Carbonic anhydrase 2 (260 aa).

S2 carries the post-translational modification N-acetylserine. S2 is modified (phosphoserine). An Alpha-carbonic anhydrase domain is found at 3–259 (HHWGYSKSNG…LKNRKIKASF (257 aa)). The segment at 16 to 39 (WHKEFPIANGDRQSPVDIDTGTAQ) is disordered. H64 acts as the Proton donor/acceptor in catalysis. Phosphoserine is present on S87. Positions 94, 96, and 119 each coordinate Zn(2+). A Phosphoserine modification is found at S165. 198-199 (TT) contributes to the substrate binding site. At S232 the chain carries Phosphoserine.

The protein belongs to the alpha-carbonic anhydrase family. As to quaternary structure, interacts with SLC4A4 and SLC26A6. Interaction with SLC4A7 regulates SLC4A7 transporter activity. Zn(2+) is required as a cofactor.

The protein localises to the cytoplasm. The protein resides in the cell membrane. The catalysed reaction is hydrogencarbonate + H(+) = CO2 + H2O. The enzyme catalyses urea = cyanamide + H2O. Its activity is regulated as follows. Inhibited by acetazolamide. Functionally, catalyzes the reversible hydration of carbon dioxide. Can also hydrate cyanamide to urea. Involved in the regulation of fluid secretion into the anterior chamber of the eye. Essential for bone resorption and osteoclast differentiation. Contributes to intracellular pH regulation in the duodenal upper villous epithelium during proton-coupled peptide absorption. Stimulates the chloride-bicarbonate exchange activity of SLC26A6. The protein is Carbonic anhydrase 2 (Ca2) of Rattus norvegicus (Rat).